The chain runs to 327 residues: Serine/threonine-protein phosphatase PP1-1 (327 aa).

Positions 63, 65, 91, and 123 each coordinate Mn(2+). Histidine 124 (proton donor) is an active-site residue. Residues histidine 172 and histidine 247 each contribute to the Mn(2+) site. The interval 305-327 is disordered; it reads GYQGSSQNWHMTPPRKNKTGNSK. Threonine 316 carries the post-translational modification Phosphothreonine; by CDC2. Residues 317 to 327 are compositionally biased toward basic residues; it reads PPRKNKTGNSK.

Belongs to the PPP phosphatase family. PP-1 subfamily. In terms of assembly, oligomer. Mn(2+) serves as cofactor.

It is found in the nucleus. The enzyme catalyses O-phospho-L-seryl-[protein] + H2O = L-seryl-[protein] + phosphate. It carries out the reaction O-phospho-L-threonyl-[protein] + H2O = L-threonyl-[protein] + phosphate. Essential role in cell cycle control. PP1 is perhaps required for exit from mitosis. This is Serine/threonine-protein phosphatase PP1-1 (dis2) from Schizosaccharomyces pombe (strain 972 / ATCC 24843) (Fission yeast).